The primary structure comprises 215 residues: Proteasome subunit beta type-1 (215 aa).

Position 1 is an N-acetylmethionine (methionine 1). Positions 1-19 are cleaved as a propeptide — removed in mature form; that stretch reads MNGIQVDINRLKKGEVSLG. Threonine 20 acts as the Nucleophile in catalysis.

Belongs to the peptidase T1B family. The 26S proteasome consists of a 20S proteasome core and two 19S regulatory subunits. The 20S proteasome core is composed of 28 subunits that are arranged in four stacked rings, resulting in a barrel-shaped structure. The two end rings are each formed by seven alpha subunits, and the two central rings are each formed by seven beta subunits. The catalytic chamber with the active sites is on the inside of the barrel.

Its subcellular location is the cytoplasm. The protein localises to the nucleus. It catalyses the reaction Cleavage of peptide bonds with very broad specificity.. In terms of biological role, the proteasome degrades poly-ubiquitinated proteins in the cytoplasm and in the nucleus. It is essential for the regulated turnover of proteins and for the removal of misfolded proteins. The proteasome is a multicatalytic proteinase complex that is characterized by its ability to cleave peptides with Arg, Phe, Tyr, Leu, and Glu adjacent to the leaving group at neutral or slightly basic pH. It has an ATP-dependent proteolytic activity. PRE3 and PRE4 are necessary for the peptidyl-glutamyl-peptide-hydrolyzing activity. Its function is as follows. This subunit is necessary for the peptidylglutamyl-peptide hydrolyzing activity. In Saccharomyces cerevisiae (strain ATCC 204508 / S288c) (Baker's yeast), this protein is Proteasome subunit beta type-1 (PRE3).